We begin with the raw amino-acid sequence, 362 residues long: Putative glutamate--cysteine ligase 2-1 (362 aa).

This sequence belongs to the glutamate--cysteine ligase type 2 family. YbdK subfamily.

The catalysed reaction is L-cysteine + L-glutamate + ATP = gamma-L-glutamyl-L-cysteine + ADP + phosphate + H(+). Its function is as follows. ATP-dependent carboxylate-amine ligase which exhibits weak glutamate--cysteine ligase activity. This Streptomyces avermitilis (strain ATCC 31267 / DSM 46492 / JCM 5070 / NBRC 14893 / NCIMB 12804 / NRRL 8165 / MA-4680) protein is Putative glutamate--cysteine ligase 2-1.